Consider the following 197-residue polypeptide: Inner membrane-spanning protein YciB (197 aa).

Helical transmembrane passes span 22–42, 48–68, 76–96, 121–141, and 144–164; these read IYSATAALIIMVLLNVFYHWF, PSMMWITLILVMLFGGATLIF, WKPSILQWVLASGFLASHLIG, AAWVLFLLFSGALNLYVAYTF, and EIWVSFKLFGLMGLTILFLIG.

The protein belongs to the YciB family.

The protein resides in the cell inner membrane. Plays a role in cell envelope biogenesis, maintenance of cell envelope integrity and membrane homeostasis. This Magnetococcus marinus (strain ATCC BAA-1437 / JCM 17883 / MC-1) protein is Inner membrane-spanning protein YciB.